The following is an 86-amino-acid chain: Large ribosomal subunit protein uL10 (86 aa).

Belongs to the universal ribosomal protein uL10 family. As to quaternary structure, part of the ribosomal stalk of the 50S ribosomal subunit. The N-terminus interacts with L11 and the large rRNA to form the base of the stalk. The C-terminus forms an elongated spine to which L12 dimers bind in a sequential fashion forming a multimeric L10(L12)X complex.

Its function is as follows. Forms part of the ribosomal stalk, playing a central role in the interaction of the ribosome with GTP-bound translation factors. This chain is Large ribosomal subunit protein uL10 (rplJ), found in Serratia marcescens.